The following is a 268-amino-acid chain: Thymidylate synthase (268 aa).

Residues arginine 26 and 131 to 132 (RR) each bind dUMP. Cysteine 151 functions as the Nucleophile in the catalytic mechanism. DUMP is bound by residues 171 to 174 (RSAD), asparagine 182, and 212 to 214 (HIY). Aspartate 174 is a (6R)-5,10-methylene-5,6,7,8-tetrahydrofolate binding site. Serine 267 provides a ligand contact to (6R)-5,10-methylene-5,6,7,8-tetrahydrofolate.

The protein belongs to the thymidylate synthase family. Bacterial-type ThyA subfamily. In terms of assembly, homodimer.

Its subcellular location is the cytoplasm. It carries out the reaction dUMP + (6R)-5,10-methylene-5,6,7,8-tetrahydrofolate = 7,8-dihydrofolate + dTMP. It participates in pyrimidine metabolism; dTTP biosynthesis. In terms of biological role, catalyzes the reductive methylation of 2'-deoxyuridine-5'-monophosphate (dUMP) to 2'-deoxythymidine-5'-monophosphate (dTMP) while utilizing 5,10-methylenetetrahydrofolate (mTHF) as the methyl donor and reductant in the reaction, yielding dihydrofolate (DHF) as a by-product. This enzymatic reaction provides an intracellular de novo source of dTMP, an essential precursor for DNA biosynthesis. In Corynebacterium aurimucosum (strain ATCC 700975 / DSM 44827 / CIP 107346 / CN-1) (Corynebacterium nigricans), this protein is Thymidylate synthase.